The chain runs to 317 residues: Protoheme IX farnesyltransferase (317 aa).

Transmembrane regions (helical) follow at residues 44–64 (IGLI…ANTF), 93–113 (HASV…WVLC), 116–136 (VLAG…YTKY), 143–163 (LNIV…WAVI), 178–198 (AIVL…ALAM), 221–241 (VTRQ…LLIP), 243–263 (ASWI…VMAV), and 288–308 (LAVY…TIGG).

It belongs to the UbiA prenyltransferase family. Protoheme IX farnesyltransferase subfamily.

Its subcellular location is the cell membrane. It carries out the reaction heme b + (2E,6E)-farnesyl diphosphate + H2O = Fe(II)-heme o + diphosphate. It functions in the pathway porphyrin-containing compound metabolism; heme O biosynthesis; heme O from protoheme: step 1/1. Converts heme B (protoheme IX) to heme O by substitution of the vinyl group on carbon 2 of heme B porphyrin ring with a hydroxyethyl farnesyl side group. The sequence is that of Protoheme IX farnesyltransferase from Corynebacterium diphtheriae (strain ATCC 700971 / NCTC 13129 / Biotype gravis).